A 120-amino-acid chain; its full sequence is Chaperonin GroEL (120 aa).

23-27 contributes to the ATP binding site; sequence DGTTT.

Belongs to the chaperonin (HSP60) family. As to quaternary structure, forms a cylinder of 14 subunits composed of two heptameric rings stacked back-to-back. Interacts with the co-chaperonin GroES.

The protein localises to the cytoplasm. The enzyme catalyses ATP + H2O + a folded polypeptide = ADP + phosphate + an unfolded polypeptide.. Functionally, together with its co-chaperonin GroES, plays an essential role in assisting protein folding. The GroEL-GroES system forms a nano-cage that allows encapsulation of the non-native substrate proteins and provides a physical environment optimized to promote and accelerate protein folding. This chain is Chaperonin GroEL, found in Mycolicibacterium vaccae (Mycobacterium vaccae).